We begin with the raw amino-acid sequence, 261 residues long: tRNA pseudouridine synthase A (261 aa).

The Nucleophile role is filled by Asp-51. Position 109 (Tyr-109) interacts with substrate.

This sequence belongs to the tRNA pseudouridine synthase TruA family. Homodimer.

It catalyses the reaction uridine(38/39/40) in tRNA = pseudouridine(38/39/40) in tRNA. Formation of pseudouridine at positions 38, 39 and 40 in the anticodon stem and loop of transfer RNAs. The chain is tRNA pseudouridine synthase A from Shewanella baltica (strain OS185).